Here is a 363-residue protein sequence, read N- to C-terminus: D(1) dopamine receptor (363 aa).

Residues 1–24 (MAVLDLNLTTVIDSGFMESDRSVR) lie on the Extracellular side of the membrane. N-linked (GlcNAc...) asparagine glycosylation occurs at asparagine 7. Residues 25–45 (VLTGCFLSVLILSTLLGNTLV) form a helical membrane-spanning segment. Residues 46-61 (CAAVTKFRHLRSKVTN) are Cytoplasmic-facing. Residues 62 to 81 (FFVISLAVSDLLVAVLVMPW) form a helical membrane-spanning segment. At 82-98 (KAVTEVAGFWPFGAFCD) the chain is on the extracellular side. Cysteine 97 and cysteine 187 are disulfide-bonded. The helical transmembrane segment at 99–120 (IWVAFDIMCSTASILNLCVISV) threads the bilayer. Residues 121-139 (DRYWAISSPFRYERKMTPR) are Cytoplasmic-facing. Residues 140 to 164 (VAFVMISGAWTLSVLISFIPVQLKW) form a helical membrane-spanning segment. Topologically, residues 165–194 (HKAQPIGFLEVNASRRDLPTDNCDSSLNRT) are extracellular. The helical transmembrane segment at 195 to 219 (YAISSSLISFYIPVAIMIVTYTQIY) threads the bilayer. Over 220–271 (RIAQKQIRRISALERAAESAQIRHDSMGSGSNMDLESSFKLSFKRETKVLKT) the chain is Cytoplasmic. The helical transmembrane segment at 272-297 (LSVIMGVFVCCWLPFFILNCMVPFCK) threads the bilayer. Over 298 to 310 (RTSNGLPCISPTT) the chain is Extracellular. The chain crosses the membrane as a helical span at residues 311-330 (FDVFVWFGWANSSLNPIIYA). The Cytoplasmic segment spans residues 331-363 (FNADFRRAFAILLGCQRLCPGSISMETPSLNKN). Cysteine 345 carries S-palmitoyl cysteine lipidation.

It belongs to the G-protein coupled receptor 1 family. In terms of tissue distribution, retina.

Its subcellular location is the cell membrane. It localises to the cell projection. The protein localises to the cilium membrane. In terms of biological role, dopamine receptor whose activity is mediated by G proteins which activate adenylyl cyclase. Could be involved in growth hormone release. The polypeptide is D(1) dopamine receptor (Carassius auratus (Goldfish)).